Here is a 499-residue protein sequence, read N- to C-terminus: Potassium voltage-gated channel subfamily A member 2 (499 aa).

The interval 1-27 (MTVATGEPADEAAALPGHPQDTYDPEA) is disordered. Positions 1–125 (MTVATGEPAD…YELGEEAMEM (125 aa)) are tetramerization domain. Over 1-160 (MTVATGEPAD…LLFEYPESSG (160 aa)) the chain is Cytoplasmic. Residues 161 to 182 (PARIIAIVSVMVILISIVSFCL) form a helical membrane-spanning segment. At 183–221 (ETLPIFRDENEDMHGGGVTFHTYSNSTIGYQQSTSFTDP) the chain is on the extracellular side. The N-linked (GlcNAc...) asparagine glycan is linked to asparagine 207. Residues 222 to 243 (FFIVETLCIIWFSFEFLVRFFA) form a helical membrane-spanning segment. A lipid anchor (S-palmitoyl cysteine) is attached at cysteine 244. Residues 244–254 (CPSKAGFFTNI) lie on the Cytoplasmic side of the membrane. Residues 255–275 (MNIIDIVAIIPYFITLGTELA) form a helical membrane-spanning segment. At 276–289 (EKPEDAQQGQQAMS) the chain is on the extracellular side. A helical; Voltage-sensor membrane pass occupies residues 290 to 310 (LAILRVIRLVRVFRIFKLSRH). The Cytoplasmic portion of the chain corresponds to 311 to 325 (SKGLQILGQTLKASM). Positions 312-325 (KGLQILGQTLKASM) are S4-S5 linker. The helical transmembrane segment at 326 to 347 (RELGLLIFFLFIGVILFSSAVY) threads the bilayer. The Extracellular portion of the chain corresponds to 348-361 (FAEADERESQFPSI). Positions 362–373 (PDAFWWAVVSMT) form an intramembrane region, helical. Positions 374 to 379 (TVGYGD) match the Selectivity filter motif. The stretch at 374–381 (TVGYGDMV) is an intramembrane region. Residues 382–388 (PTTIGGK) are Extracellular-facing. Residues 389–417 (IVGSLCAIAGVLTIALPVPVIVSNFNYFY) form a helical membrane-spanning segment. At 418–499 (HRETEGEEQA…VNITKMLTDV (82 aa)) the chain is on the cytoplasmic side. Tyrosine 429 carries the post-translational modification Phosphotyrosine. Phosphoserine is present on residues serine 434, serine 440, serine 441, and serine 449. Tyrosine 458 carries the phosphotyrosine modification. Serine 468 carries the phosphoserine modification. Positions 497–499 (TDV) match the PDZ-binding motif.

It belongs to the potassium channel family. A (Shaker) (TC 1.A.1.2) subfamily. Kv1.2/KCNA2 sub-subfamily. In terms of assembly, homotetramer and heterotetramer with other channel-forming alpha subunits, such as KCNA1, KCNA4, KCNA5, KCNA6 and KCNA7. Channel activity is regulated by interaction with the beta subunits, including KCNAB1 and KCNAB2. Identified in a complex with KCNA1 and KCNAB2. Identified in a complex with KCNA5 and KCNAB1. Interacts with the beta subunit KCNAB1. Identified in a complex with KCNA4 and FYN. Interacts with PTK2B. Interacts (via C-terminus) with CTTN. Interacts (via N-terminal cytoplasmic domain) with RHOA (GTP-bound form); this regulates channel activity by reducing location at the cell surface in response to CHRM1 activation. Interacts with DRD2. Interacts with SIGMAR1; cocaine consumption leads to increased interaction. Interacts with ADAM22. Interacts with CNTNAP2. Interacts (via C-terminus) with the PDZ domains of DLG1, DLG2 and DLG4. Interacts with ADAM11. Interacts with LYNX1. Phosphorylated on tyrosine residues; phosphorylation increases in response to ischemia. Phosphorylated on tyrosine residues by activated PTK2B/PYK2. Phosphorylation on tyrosine residues suppresses ion channel activity. Phosphorylated on tyrosine residues in response to CHRM1 activation; this abolishes interaction with CTTN. This is probably due to endocytosis of the phosphorylated channel subunits. Phosphorylated on serine residues in response to increased cAMP levels; phosphorylation is apparently not catalyzed by PKA. In terms of processing, N-glycosylated, with complex, sialylated N-glycans. Expressed in a wide variety of gastrointestinal smooth muscles. Not expressed in portal vein, renal artery, and uterus.

The protein localises to the cell membrane. It localises to the membrane. The protein resides in the cell projection. Its subcellular location is the axon. It is found in the synapse. The protein localises to the presynaptic cell membrane. It localises to the synaptosome. The protein resides in the endoplasmic reticulum membrane. Its subcellular location is the dendrite. It is found in the lamellipodium membrane. The protein localises to the cell junction. It localises to the paranodal septate junction. The catalysed reaction is K(+)(in) = K(+)(out). With respect to regulation, inhibited by 4-aminopyridine (4-AP). Inhibited by dendrotoxin (DTX) and charybdotoxin (CTX), but not by tetraethylammonium (TEA). Inhibited by tityustoxin-K alpha (TsTX-Kalpha), a toxin that is highly specific for KCNA2. Inhibited by maurotoxin. Inhibited by kappaM conotoxins kappaM-RIIIJ and kappaM-RIIIK. Functionally, voltage-gated potassium channel that mediates transmembrane potassium transport in excitable membranes, primarily in the brain and the central nervous system, but also in the cardiovascular system. Prevents aberrant action potential firing and regulates neuronal output. Forms tetrameric potassium-selective channels through which potassium ions pass in accordance with their electrochemical gradient. The channel alternates between opened and closed conformations in response to the voltage difference across the membrane. Can form functional homotetrameric channels and heterotetrameric channels that contain variable proportions of KCNA1, KCNA2, KCNA4, KCNA5, KCNA6, KCNA7, and possibly other family members as well; channel properties depend on the type of alpha subunits that are part of the channel. Channel properties are modulated by cytoplasmic beta subunits that regulate the subcellular location of the alpha subunits and promote rapid inactivation of delayed rectifier potassium channels. In vivo, membranes probably contain a mixture of heteromeric potassium channel complexes, making it difficult to assign currents observed in intact tissues to any particular potassium channel family member. Homotetrameric KCNA2 forms a delayed-rectifier potassium channel that opens in response to membrane depolarization, followed by slow spontaneous channel closure. In contrast, a heteromultimer formed by KCNA2 and KCNA4 shows rapid inactivation. Regulates neuronal excitability and plays a role as pacemaker in the regulation of neuronal action potentials. KCNA2-containing channels play a presynaptic role and prevent hyperexcitability and aberrant action potential firing. Response to toxins that are selective for KCNA2-containing potassium channels suggests that in Purkinje cells, dendritic subthreshold KCNA2-containing potassium channels prevent random spontaneous calcium spikes, suppressing dendritic hyperexcitability without hindering the generation of somatic action potentials, and thereby play an important role in motor coordination. Plays a role in the induction of long-term potentiation of neuron excitability in the CA3 layer of the hippocampus. May function as down-stream effector for G protein-coupled receptors and inhibit GABAergic inputs to basolateral amygdala neurons. May contribute to the regulation of neurotransmitter release, such as gamma-aminobutyric acid (GABA). Contributes to the regulation of the axonal release of the neurotransmitter dopamine. Reduced KCNA2 expression plays a role in the perception of neuropathic pain after peripheral nerve injury, but not acute pain. Plays a role in the regulation of the time spent in non-rapid eye movement (NREM) sleep. The polypeptide is Potassium voltage-gated channel subfamily A member 2 (KCNA2) (Canis lupus familiaris (Dog)).